A 291-amino-acid chain; its full sequence is Nucleotide-binding protein LGAS_1315 (291 aa).

13–20 (GMSGAGKT) contributes to the ATP binding site. 63–66 (DLRV) lines the GTP pocket.

The protein belongs to the RapZ-like family.

In terms of biological role, displays ATPase and GTPase activities. In Lactobacillus gasseri (strain ATCC 33323 / DSM 20243 / BCRC 14619 / CIP 102991 / JCM 1131 / KCTC 3163 / NCIMB 11718 / NCTC 13722 / AM63), this protein is Nucleotide-binding protein LGAS_1315.